Consider the following 369-residue polypeptide: Ribonuclease 3 (369 aa).

An RNase III domain is found at 6–142 (IGFVQSSINY…IIGAVAADCD (137 aa)). Residue Glu46 participates in Mg(2+) binding. Asp50 is an active-site residue. Mg(2+) contacts are provided by Asp128 and Glu131. Residue Glu131 is part of the active site. Residues 272–341 (NPASTLHELF…SLKLLKFIAK (70 aa)) enclose the DRBM domain.

Belongs to the ribonuclease III family. Homodimer. Requires Mg(2+) as cofactor.

It is found in the cytoplasm. It catalyses the reaction Endonucleolytic cleavage to 5'-phosphomonoester.. Its function is as follows. Digests double-stranded RNA. Involved in the processing of primary rRNA transcript to yield the immediate precursors to the large and small rRNAs (23S and 16S). Processes some mRNAs, and tRNAs when they are encoded in the rRNA operon. Processes pre-crRNA and tracrRNA of type II CRISPR loci if present in the organism. The sequence is that of Ribonuclease 3 (rnc) from Treponema succinifaciens (strain ATCC 33096 / DSM 2489 / 6091).